Reading from the N-terminus, the 212-residue chain is Pyridoxine/pyridoxamine 5'-phosphate oxidase (212 aa).

Substrate is bound by residues arginine 8–tyrosine 11 and lysine 66. Residues arginine 61–lysine 66, phenylalanine 76–threonine 77, arginine 82, lysine 83, and glutamine 105 each bind FMN. Tyrosine 123, arginine 127, and serine 131 together coordinate substrate. Residues glutamine 140 to serine 141 and tryptophan 184 contribute to the FMN site. Arginine 190–histidine 192 lines the substrate pocket. An FMN-binding site is contributed by arginine 194.

This sequence belongs to the pyridoxamine 5'-phosphate oxidase family. Homodimer. Requires FMN as cofactor.

It carries out the reaction pyridoxamine 5'-phosphate + O2 + H2O = pyridoxal 5'-phosphate + H2O2 + NH4(+). It catalyses the reaction pyridoxine 5'-phosphate + O2 = pyridoxal 5'-phosphate + H2O2. The protein operates within cofactor metabolism; pyridoxal 5'-phosphate salvage; pyridoxal 5'-phosphate from pyridoxamine 5'-phosphate: step 1/1. It participates in cofactor metabolism; pyridoxal 5'-phosphate salvage; pyridoxal 5'-phosphate from pyridoxine 5'-phosphate: step 1/1. In terms of biological role, catalyzes the oxidation of either pyridoxine 5'-phosphate (PNP) or pyridoxamine 5'-phosphate (PMP) into pyridoxal 5'-phosphate (PLP). This Cupriavidus pinatubonensis (strain JMP 134 / LMG 1197) (Cupriavidus necator (strain JMP 134)) protein is Pyridoxine/pyridoxamine 5'-phosphate oxidase.